Here is a 562-residue protein sequence, read N- to C-terminus: MSGTILENLSGRKLSILVTTLLLCQVLCFLLGGLYAPLPAGHVTVLGSLCREDHGRQNDTGFLLYSRGAGACIPVTREEVEQDSTKMANELVHVFQMPLPRDLRDLDYSRWQQNLIGVLQVEFGYDSSSELREPPRELQLTIDMRLAYRNKGDPDNGWKLYAHGVEHRYLDCVSSHVGPTETLYSCDMIPLFELGALHHSFYLLNLRFPLDTPSQMNLQFGHMHDLTLTAIHQNGGFTQIWLLLKTVLFPFVVGIMIWFWRRVHLLQRSPALLEYMLIYLGAALTFLNLPLEYLSLVFEMPYMLLLSDIRQGIFYAMLLTFWLVFAGEHMLIQDAPNKSTIRSRYWKHLSAVVVGCISLFVFDICERGVQLRNPFYSIWAMPLAAKMAMTFIVLAGVSAAIYFLFLCYMIWKVFRNIGDKRTSLPSMSQARRLHYESLIYRFKFLMLATIVCAALTVTGFIMGQRAEGQWDWNDNVAIQPTSAFLTGVYGMWNIYIFALLILYAPSHKQWPTMHHSDETTQSNENIVASAASEEIEFSHLPSDSNPSEISSLTSFTRKVAFD.

Residues 1–13 (MSGTILENLSGRK) are Cytoplasmic-facing. The helical transmembrane segment at 14 to 34 (LSILVTTLLLCQVLCFLLGGL) threads the bilayer. Residues 35–239 (YAPLPAGHVT…AIHQNGGFTQ (205 aa)) are Lumenal-facing. N58 is a glycosylation site (N-linked (GlcNAc...) asparagine). Residues 240-260 (IWLLLKTVLFPFVVGIMIWFW) traverse the membrane as a helical segment. At 261–270 (RRVHLLQRSP) the chain is on the cytoplasmic side. A helical membrane pass occupies residues 271–291 (ALLEYMLIYLGAALTFLNLPL). Topologically, residues 292–311 (EYLSLVFEMPYMLLLSDIRQ) are lumenal. Residues 312–332 (GIFYAMLLTFWLVFAGEHMLI) traverse the membrane as a helical segment. Topologically, residues 333–344 (QDAPNKSTIRSR) are cytoplasmic. A helical transmembrane segment spans residues 345 to 365 (YWKHLSAVVVGCISLFVFDIC). The Lumenal segment spans residues 366–390 (ERGVQLRNPFYSIWAMPLAAKMAMT). A helical transmembrane segment spans residues 391–411 (FIVLAGVSAAIYFLFLCYMIW). Residues 412-441 (KVFRNIGDKRTSLPSMSQARRLHYESLIYR) lie on the Cytoplasmic side of the membrane. The chain crosses the membrane as a helical span at residues 442–462 (FKFLMLATIVCAALTVTGFIM). At 463-482 (GQRAEGQWDWNDNVAIQPTS) the chain is on the lumenal side. Residues 483–503 (AFLTGVYGMWNIYIFALLILY) form a helical membrane-spanning segment. Over 504-562 (APSHKQWPTMHHSDETTQSNENIVASAASEEIEFSHLPSDSNPSEISSLTSFTRKVAFD) the chain is Cytoplasmic. The interval 539–562 (HLPSDSNPSEISSLTSFTRKVAFD) is disordered. The segment covering 541–556 (PSDSNPSEISSLTSFT) has biased composition (polar residues).

The protein belongs to the wntless family. Interacts with wg; in the Golgi. Interacts with Vps35, a component of the retromer complex; wls stability is regulated by Vps35.

The protein localises to the presynaptic cell membrane. It localises to the postsynaptic cell membrane. Its subcellular location is the cell membrane. It is found in the endoplasmic reticulum membrane. The protein resides in the endosome membrane. The protein localises to the golgi apparatus membrane. In terms of biological role, a segment polarity gene required for wingless (wg)-dependent patterning processes, acting in both wg-sending cells and wg-target cells. In non-neuronal cells wls directs wg secretion. The wls traffic loop encompasses the Golgi, the cell surface, an endocytic compartment and a retrograde route leading back to the Golgi, and involves clathrin-mediated endocytosis and the retromer complex (a conserved protein complex consisting of Vps35 and Vps26). In neuronal cells (the larval motorneuron NMJ), the wg signal moves across the synapse via the release of wls-containing exosome-like vesicles. Postsynaptic wls is required for the trafficking of fz2 through the fz2-interacting protein Grip. In Drosophila erecta (Fruit fly), this protein is Protein wntless.